The chain runs to 816 residues: Homeobox-leucine zipper protein ROC9 (816 aa).

A disordered region spans residues 26–104; sequence VFGRKNGPAA…RRKNYHRHTA (79 aa). Positions 92–101 are enriched in basic residues; sequence KKRRRKNYHR. The segment at residues 95 to 154 is a DNA-binding region (homeobox); it reads RRKNYHRHTAEQIRIMEALFKESPHPDERQRQQVSKQLGLSARQVKFWFQNRRTQIKAVQ. A coiled-coil region spans residues 149 to 182; it reads QIKAVQERHENSLLKSELEKLQDEHRAMRELAKK. Residues 265 to 296 are disordered; it reads KSAADGIASPPCSASAGAMQTNSRSPPLHDHD. Positions 302 to 541 constitute an START domain; the sequence is HDDDKPRILE…LQLQCERMVF (240 aa).

It belongs to the HD-ZIP homeobox family. Class IV subfamily.

The protein resides in the nucleus. Its function is as follows. Probable transcription factor. This is Homeobox-leucine zipper protein ROC9 (ROC9) from Oryza sativa subsp. japonica (Rice).